The sequence spans 339 residues: Intelectin-1 (339 aa).

An N-terminal signal peptide occupies residues 1–18 (MLSYSLLLLALAFPAGHA). Positions 58–108 (GDMNYGYRSCNEIKSSDSRAPDGIYTLATEDGESYQTFCDMTTNGGGWTLV) constitute a Fibrinogen C-terminal domain. Cysteine 67 and cysteine 96 are joined by a disulfide. Histidine 112, glutamate 113, asparagine 115, glycine 118, glycine 123, aspartate 124, and aspartate 159 together coordinate Ca(2+). 3 disulfide bridges follow: cysteine 120–cysteine 306, cysteine 225–cysteine 285, and cysteine 277–cysteine 291. Residue asparagine 189 is glycosylated (N-linked (GlcNAc...) asparagine). Ca(2+)-binding residues include asparagine 286, glutamate 288, glutamate 300, and aspartate 308. A carbohydrate-binding positions include 288–289 (EH) and glutamate 300.

In terms of assembly, homotrimer; disulfide-linked. Homohexamer; disulfide-linked. Forms primarily homotrimers in solution, but can also form homohexamers. N-glycosylated.

Its subcellular location is the secreted. The protein resides in the cytoplasmic vesicle. The protein localises to the secretory vesicle. Functionally, lectin that specifically recognizes microbial carbohydrate chains in a calcium-dependent manner. Binds to microbial glycans that contain a terminal acyclic 1,2-diol moiety, including beta-linked D-galactofuranose (beta-Galf) and D-phosphoglycerol-modified glycans. Binds to S.pneumoniae serotypes with glycans that contain beta-linked D-galactofuranose (beta-Galf) and with D-phosphoglycerol-modified glycans. Can bind a variety of monosaccharides (in vitro). Probably plays a role in the defense system against microorganisms. This chain is Intelectin-1 (itln1), found in Xenopus laevis (African clawed frog).